The primary structure comprises 1242 residues: Phosphorylase b kinase regulatory subunit alpha, skeletal muscle isoform (1242 aa).

Residues Ser630, Ser731, Ser737, Ser740, Ser760, Ser813, Ser974, Ser983, and Ser987 each carry the phosphoserine modification. Residues Leu812 to Leu842 are calmodulin-binding. Ser1009 is subject to Phosphoserine; by autocatalysis. Ser1020 is subject to Phosphoserine; by PKA. Ser1022 and Ser1025 each carry phosphoserine. Residues Ser1065–Ser1105 form a calmodulin-binding region. Residue Ser1132 is modified to Phosphoserine. Cys1239 is lipidated: S-farnesyl cysteine.

The protein belongs to the phosphorylase b kinase regulatory chain family. In terms of assembly, hexadecamer of 4 heterotetramers, each composed of alpha, beta, gamma, and delta subunits. Alpha (PHKA1 or PHKA2) and beta (PHKB) are regulatory subunits, gamma (PHKG1 or PHKG2) is the catalytic subunit, and delta is calmodulin. In terms of processing, although the final Cys may be farnesylated, the terminal tripeptide is probably not removed, and the C-terminus is not methylated.

It is found in the cell membrane. Its pathway is glycan biosynthesis; glycogen metabolism. By phosphorylation of various serine residues and by calcium. Functionally, phosphorylase b kinase catalyzes the phosphorylation of serine in certain substrates, including troponin I. The alpha chain may bind calmodulin. In Rattus norvegicus (Rat), this protein is Phosphorylase b kinase regulatory subunit alpha, skeletal muscle isoform (Phka1).